Reading from the N-terminus, the 280-residue chain is 3-dehydroshikimate dehydratase (280 aa).

Substrate is bound by residues Y70, R102, and E142. E142 is a binding site for Mn(2+). H144 functions as the Proton acceptor in the catalytic mechanism. 2 residues coordinate substrate: D172 and H175. D172 is a binding site for Mn(2+). H198 is a binding site for Mn(2+). The substrate site is built by Y217 and E253. Position 253 (E253) interacts with Mn(2+).

In terms of assembly, homodimer. It depends on Mn(2+) as a cofactor.

It carries out the reaction 3-dehydroshikimate = 3,4-dihydroxybenzoate + H2O. The protein operates within aromatic compound metabolism; 3,4-dihydroxybenzoate biosynthesis; 3,4-dihydroxybenzoate from 3-dehydroquinate: step 2/2. It participates in siderophore biosynthesis; petrobactin biosynthesis. Its function is as follows. Involved in the biosynthesis of petrobactin, a catecholate siderophore that functions in both iron acquisition and virulence. Catalyzes the conversion of 3-dehydroshikimate to 3,4-dihydroxybenzoate (3,4-DHBA). The polypeptide is 3-dehydroshikimate dehydratase (Bacillus anthracis).